The chain runs to 211 residues: Large ribosomal subunit protein eL13 (211 aa).

Lysine 16 bears the N6-acetyllysine mark. Serine 52, serine 77, and serine 106 each carry phosphoserine. Residues lysine 123 and lysine 145 each participate in a glycyl lysine isopeptide (Lys-Gly) (interchain with G-Cter in SUMO2) cross-link. Lysine 174 participates in a covalent cross-link: Glycyl lysine isopeptide (Lys-Gly) (interchain with G-Cter in SUMO1); alternate. Glycyl lysine isopeptide (Lys-Gly) (interchain with G-Cter in SUMO2); alternate cross-links involve residues lysine 174 and lysine 177. An N6-acetyllysine; alternate modification is found at lysine 177.

The protein belongs to the eukaryotic ribosomal protein eL13 family. As to quaternary structure, component of the 60S large ribosomal subunit (LSU). Higher levels of expression in benign breast lesions than in carcinomas.

It is found in the cytoplasm. Its function is as follows. Component of the ribosome, a large ribonucleoprotein complex responsible for the synthesis of proteins in the cell. The small ribosomal subunit (SSU) binds messenger RNAs (mRNAs) and translates the encoded message by selecting cognate aminoacyl-transfer RNA (tRNA) molecules. The large subunit (LSU) contains the ribosomal catalytic site termed the peptidyl transferase center (PTC), which catalyzes the formation of peptide bonds, thereby polymerizing the amino acids delivered by tRNAs into a polypeptide chain. The nascent polypeptides leave the ribosome through a tunnel in the LSU and interact with protein factors that function in enzymatic processing, targeting, and the membrane insertion of nascent chains at the exit of the ribosomal tunnel. As part of the LSU, it is probably required for its formation and the maturation of rRNAs. Plays a role in bone development. This chain is Large ribosomal subunit protein eL13 (RPL13), found in Homo sapiens (Human).